The sequence spans 333 residues: Ketol-acid reductoisomerase (NADP(+)) (333 aa).

The KARI N-terminal Rossmann domain occupies Met-1–Thr-179. Residues Tyr-22 to Gln-25, Ser-48, Ser-50, and Asp-80 to Gln-83 each bind NADP(+). His-105 is an active-site residue. Residue Gly-131 participates in NADP(+) binding. The region spanning Thr-180–Val-325 is the KARI C-terminal knotted domain. Residues Asp-188, Glu-192, Glu-224, and Glu-228 each coordinate Mg(2+). Ser-249 serves as a coordination point for substrate.

Belongs to the ketol-acid reductoisomerase family. Mg(2+) serves as cofactor.

It catalyses the reaction (2R)-2,3-dihydroxy-3-methylbutanoate + NADP(+) = (2S)-2-acetolactate + NADPH + H(+). The catalysed reaction is (2R,3R)-2,3-dihydroxy-3-methylpentanoate + NADP(+) = (S)-2-ethyl-2-hydroxy-3-oxobutanoate + NADPH + H(+). The protein operates within amino-acid biosynthesis; L-isoleucine biosynthesis; L-isoleucine from 2-oxobutanoate: step 2/4. Its pathway is amino-acid biosynthesis; L-valine biosynthesis; L-valine from pyruvate: step 2/4. Functionally, involved in the biosynthesis of branched-chain amino acids (BCAA). Catalyzes an alkyl-migration followed by a ketol-acid reduction of (S)-2-acetolactate (S2AL) to yield (R)-2,3-dihydroxy-isovalerate. In the isomerase reaction, S2AL is rearranged via a Mg-dependent methyl migration to produce 3-hydroxy-3-methyl-2-ketobutyrate (HMKB). In the reductase reaction, this 2-ketoacid undergoes a metal-dependent reduction by NADPH to yield (R)-2,3-dihydroxy-isovalerate. This chain is Ketol-acid reductoisomerase (NADP(+)), found in Mycobacterium leprae (strain TN).